The sequence spans 342 residues: tRNA-specific 2-thiouridylase MnmA (342 aa).

Residues 6-13 and Leu-32 contribute to the ATP site; that span reads GMSGGVDS. Catalysis depends on Cys-99, which acts as the Nucleophile. A disulfide bond links Cys-99 and Cys-190. Gly-124 contributes to the ATP binding site. Positions 140–142 are interaction with tRNA; it reads KDQ. Cys-190 acts as the Cysteine persulfide intermediate in catalysis. The interaction with tRNA stretch occupies residues 292-293; sequence RY.

This sequence belongs to the MnmA/TRMU family.

The protein localises to the cytoplasm. It carries out the reaction S-sulfanyl-L-cysteinyl-[protein] + uridine(34) in tRNA + AH2 + ATP = 2-thiouridine(34) in tRNA + L-cysteinyl-[protein] + A + AMP + diphosphate + H(+). In terms of biological role, catalyzes the 2-thiolation of uridine at the wobble position (U34) of tRNA, leading to the formation of s(2)U34. The sequence is that of tRNA-specific 2-thiouridylase MnmA from Hydrogenobaculum sp. (strain Y04AAS1).